The following is a 314-amino-acid chain: Dihydroorotate dehydrogenase (fumarate) (314 aa).

Substrate-binding positions include K46, 70-74, and N130; that span reads NSMGL. K46 participates in a covalent cross-link: Glycyl lysine isopeptide (Lys-Gly) (interchain with G-Cter in ubiquitin). 46-47 is an FMN binding site; that stretch reads KS. An FMN-binding site is contributed by N130. The Nucleophile role is filled by C133. FMN-binding residues include K167 and I195. 196 to 197 provides a ligand contact to substrate; the sequence is NS. FMN is bound by residues G224, 252–253, and 274–275; these read GG and GT.

Belongs to the dihydroorotate dehydrogenase family. Type 1 subfamily. As to quaternary structure, homodimer. It depends on FMN as a cofactor.

The protein localises to the cytoplasm. It catalyses the reaction (S)-dihydroorotate + fumarate = orotate + succinate. It functions in the pathway pyrimidine metabolism; UMP biosynthesis via de novo pathway. With respect to regulation, the activity is independent of the presence of oxygen. In terms of biological role, catalyzes the conversion of dihydroorotate to orotate with fumarate as the electron acceptor. Molecular oxygen can replace fumarate in vitro. Does not use oxaloacetate or NAD or NADP as electron acceptors. This is Dihydroorotate dehydrogenase (fumarate) (URA1) from Saccharomyces cerevisiae (strain ATCC 204508 / S288c) (Baker's yeast).